The chain runs to 238 residues: Ribose-5-phosphate isomerase A (238 aa).

Substrate-binding positions include Ser-30 to Thr-33, Asp-87 to Asp-90, and Lys-100 to Gly-103. The Proton acceptor role is filled by Glu-109. Lys-127 is a substrate binding site.

Belongs to the ribose 5-phosphate isomerase family. In terms of assembly, homodimer.

It catalyses the reaction aldehydo-D-ribose 5-phosphate = D-ribulose 5-phosphate. It functions in the pathway carbohydrate degradation; pentose phosphate pathway; D-ribose 5-phosphate from D-ribulose 5-phosphate (non-oxidative stage): step 1/1. In terms of biological role, catalyzes the reversible conversion of ribose-5-phosphate to ribulose 5-phosphate. The protein is Ribose-5-phosphate isomerase A of Synechococcus sp. (strain WH7803).